We begin with the raw amino-acid sequence, 252 residues long: ATP synthase subunit a (252 aa).

7 helical membrane-spanning segments follow: residues 6–26, 31–51, 88–108, 117–137, 144–164, 190–212, and 225–245; these read LEQF…YFSF, LFML…TLNG, FFPL…IGMI, HFII…IVGF, FFSI…LVLL, LVKI…YLGQ, and LELG…CIYL.

Belongs to the ATPase A chain family. F-type ATPases have 2 components, CF(1) - the catalytic core - and CF(0) - the membrane proton channel. CF(1) has five subunits: alpha(3), beta(3), gamma(1), delta(1), epsilon(1). CF(0) has three main subunits: a, b and c.

Its subcellular location is the mitochondrion inner membrane. Functionally, mitochondrial membrane ATP synthase (F(1)F(0) ATP synthase or Complex V) produces ATP from ADP in the presence of a proton gradient across the membrane which is generated by electron transport complexes of the respiratory chain. F-type ATPases consist of two structural domains, F(1) - containing the extramembraneous catalytic core and F(0) - containing the membrane proton channel, linked together by a central stalk and a peripheral stalk. During catalysis, ATP synthesis in the catalytic domain of F(1) is coupled via a rotary mechanism of the central stalk subunits to proton translocation. Key component of the proton channel; it may play a direct role in the translocation of protons across the membrane. This chain is ATP synthase subunit a (ATP6), found in Marchantia polymorpha (Common liverwort).